Reading from the N-terminus, the 289-residue chain is MAHDQLYRYLFENYAVRGELVTVNETYQRILTNHDYPSAVQTLLGEMLVATSLLTATLKFSGDITVQLQGDGPLKLAVINGNHQQQMRGVARLQGDIAPGSSLKEMVGNGYLVITITPTEGERYQGVVGLEGETVAECLESYFQQSEQLPTRLFIRTGQHEGKQAAAGMLLQVLPAQDADRDDFDHLAQLTTTVKGEELFSLPATEVLYRLYHQEEVTVYEPQDVEFRCHCSRDRCADALMTLSDQEVNEMIEQDGEIDMHCDYCGTHYLFNSLDIRAIRHDSSGNLLH.

2 disulfides stabilise this stretch: cysteine 229–cysteine 231 and cysteine 262–cysteine 265.

Belongs to the HSP33 family. Post-translationally, under oxidizing conditions two disulfide bonds are formed involving the reactive cysteines. Under reducing conditions zinc is bound to the reactive cysteines and the protein is inactive.

It localises to the cytoplasm. Functionally, redox regulated molecular chaperone. Protects both thermally unfolding and oxidatively damaged proteins from irreversible aggregation. Plays an important role in the bacterial defense system toward oxidative stress. The sequence is that of 33 kDa chaperonin from Pectobacterium carotovorum subsp. carotovorum (strain PC1).